The primary structure comprises 341 residues: Probable long-chain-alcohol O-fatty-acyltransferase 9 (341 aa).

The next 7 membrane-spanning stretches (helical) occupy residues isoleucine 9–isoleucine 29, leucine 36–valine 56, glycine 82–isoleucine 102, phenylalanine 122–leucine 142, valine 146–leucine 166, methionine 231–isoleucine 251, and arginine 295–isoleucine 315.

The protein belongs to the wax synthase family.

Its subcellular location is the membrane. The enzyme catalyses a long chain fatty alcohol + a fatty acyl-CoA = a wax ester + CoA. In terms of biological role, catalyzes the final step in the synthesis of long-chain linear esters (waxes). The protein is Probable long-chain-alcohol O-fatty-acyltransferase 9 of Arabidopsis thaliana (Mouse-ear cress).